The sequence spans 156 residues: Small ribosomal subunit protein uS7 (156 aa).

Belongs to the universal ribosomal protein uS7 family. In terms of assembly, part of the 30S ribosomal subunit. Contacts proteins S9 and S11.

Functionally, one of the primary rRNA binding proteins, it binds directly to 16S rRNA where it nucleates assembly of the head domain of the 30S subunit. Is located at the subunit interface close to the decoding center, probably blocks exit of the E-site tRNA. This chain is Small ribosomal subunit protein uS7, found in Acidithiobacillus ferrooxidans (strain ATCC 53993 / BNL-5-31) (Leptospirillum ferrooxidans (ATCC 53993)).